The chain runs to 258 residues: 3-deoxy-manno-octulosonate cytidylyltransferase (258 aa).

This sequence belongs to the KdsB family.

The protein resides in the cytoplasm. The enzyme catalyses 3-deoxy-alpha-D-manno-oct-2-ulosonate + CTP = CMP-3-deoxy-beta-D-manno-octulosonate + diphosphate. The protein operates within nucleotide-sugar biosynthesis; CMP-3-deoxy-D-manno-octulosonate biosynthesis; CMP-3-deoxy-D-manno-octulosonate from 3-deoxy-D-manno-octulosonate and CTP: step 1/1. It participates in bacterial outer membrane biogenesis; lipopolysaccharide biosynthesis. Its function is as follows. Activates KDO (a required 8-carbon sugar) for incorporation into bacterial lipopolysaccharide in Gram-negative bacteria. This chain is 3-deoxy-manno-octulosonate cytidylyltransferase, found in Parvibaculum lavamentivorans (strain DS-1 / DSM 13023 / NCIMB 13966).